The chain runs to 321 residues: 4-hydroxy-3-methylbut-2-enyl diphosphate reductase (321 aa).

Cysteine 13 lines the [4Fe-4S] cluster pocket. The (2E)-4-hydroxy-3-methylbut-2-enyl diphosphate site is built by histidine 41 and histidine 75. Dimethylallyl diphosphate is bound by residues histidine 41 and histidine 75. Residues histidine 41 and histidine 75 each contribute to the isopentenyl diphosphate site. Cysteine 97 contacts [4Fe-4S] cluster. (2E)-4-hydroxy-3-methylbut-2-enyl diphosphate is bound at residue histidine 125. Histidine 125 lines the dimethylallyl diphosphate pocket. Histidine 125 is an isopentenyl diphosphate binding site. Glutamate 127 (proton donor) is an active-site residue. Threonine 168 serves as a coordination point for (2E)-4-hydroxy-3-methylbut-2-enyl diphosphate. Cysteine 225 provides a ligand contact to [4Fe-4S] cluster. (2E)-4-hydroxy-3-methylbut-2-enyl diphosphate is bound by residues serine 253, serine 254, asparagine 255, and serine 302. Dimethylallyl diphosphate contacts are provided by serine 253, serine 254, asparagine 255, and serine 302. Isopentenyl diphosphate-binding residues include serine 253, serine 254, asparagine 255, and serine 302.

The protein belongs to the IspH family. [4Fe-4S] cluster serves as cofactor.

It catalyses the reaction isopentenyl diphosphate + 2 oxidized [2Fe-2S]-[ferredoxin] + H2O = (2E)-4-hydroxy-3-methylbut-2-enyl diphosphate + 2 reduced [2Fe-2S]-[ferredoxin] + 2 H(+). It carries out the reaction dimethylallyl diphosphate + 2 oxidized [2Fe-2S]-[ferredoxin] + H2O = (2E)-4-hydroxy-3-methylbut-2-enyl diphosphate + 2 reduced [2Fe-2S]-[ferredoxin] + 2 H(+). The protein operates within isoprenoid biosynthesis; dimethylallyl diphosphate biosynthesis; dimethylallyl diphosphate from (2E)-4-hydroxy-3-methylbutenyl diphosphate: step 1/1. It participates in isoprenoid biosynthesis; isopentenyl diphosphate biosynthesis via DXP pathway; isopentenyl diphosphate from 1-deoxy-D-xylulose 5-phosphate: step 6/6. Catalyzes the conversion of 1-hydroxy-2-methyl-2-(E)-butenyl 4-diphosphate (HMBPP) into a mixture of isopentenyl diphosphate (IPP) and dimethylallyl diphosphate (DMAPP). Acts in the terminal step of the DOXP/MEP pathway for isoprenoid precursor biosynthesis. The chain is 4-hydroxy-3-methylbut-2-enyl diphosphate reductase from Pelodictyon phaeoclathratiforme (strain DSM 5477 / BU-1).